We begin with the raw amino-acid sequence, 320 residues long: Aspartate carbamoyltransferase catalytic subunit (320 aa).

Positions 68 and 69 each coordinate carbamoyl phosphate. Lys96 provides a ligand contact to L-aspartate. Carbamoyl phosphate is bound by residues Arg118, His148, and Gln151. Positions 181 and 236 each coordinate L-aspartate. Carbamoyl phosphate contacts are provided by Gly277 and Pro278.

It belongs to the aspartate/ornithine carbamoyltransferase superfamily. ATCase family. As to quaternary structure, heterododecamer (2C3:3R2) of six catalytic PyrB chains organized as two trimers (C3), and six regulatory PyrI chains organized as three dimers (R2).

The enzyme catalyses carbamoyl phosphate + L-aspartate = N-carbamoyl-L-aspartate + phosphate + H(+). It participates in pyrimidine metabolism; UMP biosynthesis via de novo pathway; (S)-dihydroorotate from bicarbonate: step 2/3. Its function is as follows. Catalyzes the condensation of carbamoyl phosphate and aspartate to form carbamoyl aspartate and inorganic phosphate, the committed step in the de novo pyrimidine nucleotide biosynthesis pathway. The chain is Aspartate carbamoyltransferase catalytic subunit from Paracidovorax citrulli (strain AAC00-1) (Acidovorax citrulli).